A 560-amino-acid chain; its full sequence is Digoxin reductase (560 aa).

Residues 1–48 (MEYGKCRGIERGMGRRDFLKAATLLGATAAGAGMLAGCAPKSASEAQA) constitute a signal peptide (tat-type signal).

The protein belongs to the FAD-dependent oxidoreductase 2 family. As to quaternary structure, may form a membrane-associated complex with Cgr1. It depends on FAD as a cofactor. [4Fe-4S] cluster is required as a cofactor. Predicted to be exported by the Tat system. The position of the signal peptide cleavage has not been experimentally proven.

It localises to the cell membrane. The enzyme catalyses digoxin + 2 Fe(II)-[cytochrome c] + 3 H(+) = dihydrodigoxin + 2 Fe(III)-[cytochrome c]. The catalysed reaction is digitoxin + 2 Fe(II)-[cytochrome c] + 3 H(+) = dihydrodigitoxin + 2 Fe(III)-[cytochrome c]. It catalyses the reaction digoxigenin + 2 Fe(II)-[cytochrome c] + 3 H(+) = dihydrodigoxigenin + 2 Fe(III)-[cytochrome c]. It carries out the reaction ouabain + 2 Fe(II)-[cytochrome c] + 3 H(+) = dihydroouabain + 2 Fe(III)-[cytochrome c]. The enzyme catalyses ouabagenin + 2 Fe(II)-[cytochrome c] + 3 H(+) = dihydroouabagenin + 2 Fe(III)-[cytochrome c]. Functionally, involved in the inactivation of the cardiac medication and plant natural product digoxin, thus decreasing drug efficacy and toxicity. Catalyzes the reduction of the alpha,beta-unsaturated butyrolactone ring of digoxin to the inactive metabolite dihydrodigoxin. Likely uses the cytochrome Cgr1 as the physiological electron donor, encoded by the adjacent gene in the locus. Only reduces digoxin and other cardenolide toxins, such as digitoxin, digoxigenin, ouabain and ouabagenin. Therefore is a specialized enzyme present in some gut bacteria E.lenta that protects their human host against ingested plant toxins. This chain is Digoxin reductase, found in Eggerthella lenta (strain ATCC 25559 / DSM 2243 / CCUG 17323 / JCM 9979 / KCTC 3265 / NCTC 11813 / VPI 0255 / 1899 B) (Eubacterium lentum).